The chain runs to 78 residues: Large ribosomal subunit protein bL28 (78 aa).

The tract at residues M1–T25 is disordered.

It belongs to the bacterial ribosomal protein bL28 family.

This Vibrio cholerae serotype O1 (strain ATCC 39541 / Classical Ogawa 395 / O395) protein is Large ribosomal subunit protein bL28.